The following is a 71-amino-acid chain: Beta-defensin 124 (71 aa).

The signal sequence occupies residues 1-22; sequence MTQLLLFLVALLVLGHVPSGRS. Cystine bridges form between Cys-27-Cys-54, Cys-34-Cys-48, and Cys-38-Cys-55.

This sequence belongs to the beta-defensin family.

Its subcellular location is the secreted. Functionally, has antibacterial activity. The sequence is that of Beta-defensin 124 (DEFB124) from Pan troglodytes (Chimpanzee).